The primary structure comprises 243 residues: Leucyl/phenylalanyl-tRNA--protein transferase (243 aa).

It belongs to the L/F-transferase family.

It localises to the cytoplasm. It carries out the reaction N-terminal L-lysyl-[protein] + L-leucyl-tRNA(Leu) = N-terminal L-leucyl-L-lysyl-[protein] + tRNA(Leu) + H(+). The catalysed reaction is N-terminal L-arginyl-[protein] + L-leucyl-tRNA(Leu) = N-terminal L-leucyl-L-arginyl-[protein] + tRNA(Leu) + H(+). It catalyses the reaction L-phenylalanyl-tRNA(Phe) + an N-terminal L-alpha-aminoacyl-[protein] = an N-terminal L-phenylalanyl-L-alpha-aminoacyl-[protein] + tRNA(Phe). Functions in the N-end rule pathway of protein degradation where it conjugates Leu, Phe and, less efficiently, Met from aminoacyl-tRNAs to the N-termini of proteins containing an N-terminal arginine or lysine. The polypeptide is Leucyl/phenylalanyl-tRNA--protein transferase (Vibrio cholerae serotype O1 (strain ATCC 39541 / Classical Ogawa 395 / O395)).